The primary structure comprises 239 residues: Large ribosomal subunit protein uL30 (239 aa).

The interval 1 to 37 (MSKFVPENVQKKLARDEKLRKAKAEQRKASSAQMKQR) is disordered. Basic and acidic residues predominate over residues 9–28 (VQKKLARDEKLRKAKAEQRK).

Belongs to the universal ribosomal protein uL30 family.

This chain is Large ribosomal subunit protein uL30 (RPL7), found in Tetrahymena thermophila.